Here is a 308-residue protein sequence, read N- to C-terminus: Cyclin-D2-1 (308 aa).

Positions 286 to 308 (EGLSYDSSSPPPPKRRKRSPPGT) are disordered. Over residues 298–308 (PKRRKRSPPGT) the composition is skewed to basic residues.

The protein belongs to the cyclin family. Cyclin D subfamily.

The polypeptide is Cyclin-D2-1 (CYCD2-1) (Oryza sativa subsp. japonica (Rice)).